The primary structure comprises 326 residues: Aldo-keto reductase family 1 member D1 (326 aa).

NADP(+) contacts are provided by residues 22-26 (GLGTY) and Asp-52. Residue Tyr-26 participates in substrate binding. Substrate is bound by residues Tyr-57, Trp-88, Glu-119, and Tyr-131. The Proton donor role is filled by Tyr-57. Residues 168–169 (SN), Gln-192, and 219–224 (YSPLGT) contribute to the NADP(+) site. Residue Trp-230 coordinates substrate. 273 to 283 (KSTTPERIKEN) contributes to the NADP(+) binding site.

Belongs to the aldo/keto reductase family. The N-terminus is blocked.

It localises to the cytoplasm. The catalysed reaction is 5beta-cholestan-3-one + NADP(+) = cholest-4-en-3-one + NADPH + H(+). It carries out the reaction 4,5beta-dihydrocortisone + NADP(+) = cortisone + NADPH + H(+). The enzyme catalyses cortisol + NADPH + H(+) = 5beta-dihydrocortisol + NADP(+). It catalyses the reaction corticosterone + NADPH + H(+) = 5beta-dihydrocorticosterone + NADP(+). The catalysed reaction is 7alpha,12alpha-dihydroxycholest-4-en-3-one + NADPH + H(+) = 7alpha,12alpha-dihydroxy-5beta-cholestan-3-one + NADP(+). It carries out the reaction 7alpha-hydroxycholest-4-en-3-one + NADPH + H(+) = 7alpha-hydroxy-5beta-cholestan-3-one + NADP(+). The enzyme catalyses epitestosterone + NADPH + H(+) = 5beta-dihydroepitestosterone + NADP(+). It catalyses the reaction androst-4-ene-3,17-dione + NADPH + H(+) = 5beta-androstane-3,17-dione + NADP(+). The catalysed reaction is progesterone + NADPH + H(+) = 5beta-pregnan-3,20-dione + NADP(+). It carries out the reaction 21-hydroxyprogesterone + NADPH + H(+) = 5beta-dihydrodeoxycorticosterone + NADP(+). The enzyme catalyses aldosterone + NADPH + H(+) = 5beta-dihydroaldosterone + NADP(+). It catalyses the reaction 17beta-hydroxyandrosta-1,4-dien-3-one + NADPH + H(+) = 17beta-hydroxy-5beta-androst-1-en-3-one + NADP(+). The catalysed reaction is 17beta-hydroxyestr-4-en-3-one + NADPH + H(+) = 17beta-hydroxy-5beta-estran-3-one + NADP(+). It carries out the reaction 5beta-dihydrotestosterone + NADP(+) = testosterone + NADPH + H(+). The enzyme catalyses androst-4-ene-3,11,17-trione + NADPH + H(+) = 17beta-hydroxyandrost-4-ene-3,11-dione + NADP(+). Its activity is regulated as follows. Subject to inhibition by high substrate concentrations. Inhibited by testosterone concentrations above 10 uM. Inhibited by the primary and secondary bile acids chenodeoxycholic acid and ursodeoxycholic acid. Its function is as follows. Catalyzes the stereospecific NADPH-dependent reduction of the C4-C5 double bond of bile acid intermediates and steroid hormones carrying a delta(4)-3-one structure to yield an A/B cis-ring junction. This cis-configuration is crucial for bile acid biosynthesis and plays important roles in steroid metabolism. Capable of reducing a broad range of delta-(4)-3-ketosteroids from C18 (such as, 17beta-hydroxyestr-4-en-3-one) to C27 (such as, 7alpha-hydroxycholest-4-en-3-one). The chain is Aldo-keto reductase family 1 member D1 (Akr1d1) from Rattus norvegicus (Rat).